A 143-amino-acid polypeptide reads, in one-letter code: Transcriptional regulator MraZ (143 aa).

SpoVT-AbrB domains lie at 5–47 (EYEH…TLEE) and 76–119 (AVEV…DRAS).

It belongs to the MraZ family. In terms of assembly, forms oligomers.

It localises to the cytoplasm. The protein localises to the nucleoid. In Staphylococcus carnosus (strain TM300), this protein is Transcriptional regulator MraZ.